The following is a 241-amino-acid chain: Translation initiation factor IF-3 (241 aa).

The segment covering 193–203 (AAEKARQKAIQ) has biased composition (basic and acidic residues). Residues 193-241 (AAEKARQKAIQEGRAAPAQDDTEDEEIEKLERELEEQDDEDDDEAEATE) are disordered. Over residues 212 to 241 (DDTEDEEIEKLERELEEQDDEDDDEAEATE) the composition is skewed to acidic residues.

The protein belongs to the IF-3 family. In terms of assembly, monomer.

Its subcellular location is the cytoplasm. In terms of biological role, IF-3 binds to the 30S ribosomal subunit and shifts the equilibrium between 70S ribosomes and their 50S and 30S subunits in favor of the free subunits, thus enhancing the availability of 30S subunits on which protein synthesis initiation begins. This Sorangium cellulosum (strain So ce56) (Polyangium cellulosum (strain So ce56)) protein is Translation initiation factor IF-3.